The chain runs to 213 residues: Probable chemoreceptor glutamine deamidase CheD (213 aa).

Residues 1–12 are compositionally biased toward basic residues; it reads MNRHRPHSHRSK. The interval 1–25 is disordered; it reads MNRHRPHSHRSKPASTQDQPDSVRR.

The protein belongs to the CheD family.

It catalyses the reaction L-glutaminyl-[protein] + H2O = L-glutamyl-[protein] + NH4(+). Probably deamidates glutamine residues to glutamate on methyl-accepting chemotaxis receptors (MCPs), playing an important role in chemotaxis. The sequence is that of Probable chemoreceptor glutamine deamidase CheD from Rhodopseudomonas palustris (strain BisA53).